Here is a 196-residue protein sequence, read N- to C-terminus: uncharacterized protein (196 aa).

This is an uncharacterized protein from Sinorhizobium fredii (strain NBRC 101917 / NGR234).